The chain runs to 304 residues: tRNA-uridine aminocarboxypropyltransferase 1 (304 aa).

Ser2 carries the post-translational modification N-acetylserine. Positions 206–209 (DSTW) match the DXTW motif.

Belongs to the TDD superfamily. DTWD1 family.

The protein resides in the nucleus. It catalyses the reaction a uridine in tRNA + S-adenosyl-L-methionine = a 3-[(3S)-3-amino-3-carboxypropyl]uridine in tRNA + S-methyl-5'-thioadenosine + H(+). Its function is as follows. Catalyzes the formation of 3-(3-amino-3-carboxypropyl)uridine (acp3U) at position 20 in the D-loop of several cytoplasmic tRNAs (acp3U(20)). In Homo sapiens (Human), this protein is tRNA-uridine aminocarboxypropyltransferase 1.